Consider the following 447-residue polypeptide: Tubulin beta-5 chain (447 aa).

Positions 11, 69, 138, 142, 143, 144, 204, and 226 each coordinate GTP. Residue Glu-69 participates in Mg(2+) binding. The segment at 421–447 is disordered; sequence EYQQYQDATADDEEEDYGDEEEDEVAA. The span at 429–447 shows a compositional bias: acidic residues; the sequence is TADDEEEDYGDEEEDEVAA.

The protein belongs to the tubulin family. As to quaternary structure, dimer of alpha and beta chains. A typical microtubule is a hollow water-filled tube with an outer diameter of 25 nm and an inner diameter of 15 nM. Alpha-beta heterodimers associate head-to-tail to form protofilaments running lengthwise along the microtubule wall with the beta-tubulin subunit facing the microtubule plus end conferring a structural polarity. Microtubules usually have 13 protofilaments but different protofilament numbers can be found in some organisms and specialized cells. Requires Mg(2+) as cofactor. In terms of tissue distribution, expressed in roots, leaf sheaths, and suspension cultured cells.

Its subcellular location is the cytoplasm. It is found in the cytoskeleton. Its function is as follows. Tubulin is the major constituent of microtubules, a cylinder consisting of laterally associated linear protofilaments composed of alpha- and beta-tubulin heterodimers. Microtubules grow by the addition of GTP-tubulin dimers to the microtubule end, where a stabilizing cap forms. Below the cap, tubulin dimers are in GDP-bound state, owing to GTPase activity of alpha-tubulin. The sequence is that of Tubulin beta-5 chain (TUBB5) from Oryza sativa subsp. japonica (Rice).